A 511-amino-acid chain; its full sequence is ATP synthase subunit alpha (511 aa).

169 to 176 (GDRQTGKT) provides a ligand contact to ATP.

Belongs to the ATPase alpha/beta chains family. In terms of assembly, F-type ATPases have 2 components, CF(1) - the catalytic core - and CF(0) - the membrane proton channel. CF(1) has five subunits: alpha(3), beta(3), gamma(1), delta(1), epsilon(1). CF(0) has three main subunits: a(1), b(2) and c(9-12). The alpha and beta chains form an alternating ring which encloses part of the gamma chain. CF(1) is attached to CF(0) by a central stalk formed by the gamma and epsilon chains, while a peripheral stalk is formed by the delta and b chains.

It localises to the cell inner membrane. It carries out the reaction ATP + H2O + 4 H(+)(in) = ADP + phosphate + 5 H(+)(out). Produces ATP from ADP in the presence of a proton gradient across the membrane. The alpha chain is a regulatory subunit. This Bartonella bacilliformis (strain ATCC 35685 / KC583 / Herrer 020/F12,63) protein is ATP synthase subunit alpha.